Reading from the N-terminus, the 61-residue chain is uncharacterized protein (61 aa).

This is an uncharacterized protein from Homo sapiens (Human).